The chain runs to 534 residues: MFS transporter fmqE (534 aa).

The next 12 membrane-spanning stretches (helical) occupy residues 48-68, 109-129, 136-156, 169-189, 194-214, 228-248, 326-346, 349-369, 379-399, 407-427, 447-467, and 478-498; these read LLLF…VCAS, LWTS…GFLA, WTAV…VFSS, GAVV…VAPI, ALLQ…LGIV, IVFG…FLVP, AIGV…GLNV, VFDI…LGWL, LWLW…ALGF, LAIA…TVGV, VAFI…PYMY, and TGFV…FLVP.

Belongs to the major facilitator superfamily. Sugar transporter (TC 2.A.1.1) family.

Its subcellular location is the cytoplasmic vesicle membrane. In terms of biological role, MFS transporter; part of the gene cluster that mediates the biosynthesis of the antitumor cytotoxic peptidyl alkaloids fumiquinazolines that confer a dual-usage capability to defend against phagocytes in the environment and animal hosts. Probably involved in fumiquinazolines metabolism and transport. The protein is MFS transporter fmqE of Aspergillus fumigatus (strain ATCC MYA-4609 / CBS 101355 / FGSC A1100 / Af293) (Neosartorya fumigata).